A 72-amino-acid polypeptide reads, in one-letter code: UPF0346 protein GK1571 (72 aa).

Belongs to the UPF0346 family.

The chain is UPF0346 protein GK1571 from Geobacillus kaustophilus (strain HTA426).